We begin with the raw amino-acid sequence, 428 residues long: Enolase (428 aa).

Gln-163 serves as a coordination point for (2R)-2-phosphoglycerate. The active-site Proton donor is the Glu-205. Mg(2+) is bound by residues Asp-242, Glu-285, and Asp-312. The (2R)-2-phosphoglycerate site is built by Lys-337, Arg-366, Ser-367, and Lys-388. Lys-337 acts as the Proton acceptor in catalysis.

Belongs to the enolase family. Mg(2+) serves as cofactor.

The protein resides in the cytoplasm. The protein localises to the secreted. It is found in the cell surface. The catalysed reaction is (2R)-2-phosphoglycerate = phosphoenolpyruvate + H2O. It participates in carbohydrate degradation; glycolysis; pyruvate from D-glyceraldehyde 3-phosphate: step 4/5. Its function is as follows. Catalyzes the reversible conversion of 2-phosphoglycerate (2-PG) into phosphoenolpyruvate (PEP). It is essential for the degradation of carbohydrates via glycolysis. The polypeptide is Enolase (Moorella thermoacetica (strain ATCC 39073 / JCM 9320)).